Reading from the N-terminus, the 362-residue chain is 3-dehydroquinate synthase (362 aa).

Residues 74 to 79, 108 to 112, 132 to 133, Lys145, and Lys154 each bind NAD(+); these read DGEEHK, GVTGD, and TT. The Zn(2+) site is built by Glu187, His250, and His267.

This sequence belongs to the sugar phosphate cyclases superfamily. Dehydroquinate synthase family. Requires Co(2+) as cofactor. It depends on Zn(2+) as a cofactor. NAD(+) serves as cofactor.

It is found in the cytoplasm. It carries out the reaction 7-phospho-2-dehydro-3-deoxy-D-arabino-heptonate = 3-dehydroquinate + phosphate. Its pathway is metabolic intermediate biosynthesis; chorismate biosynthesis; chorismate from D-erythrose 4-phosphate and phosphoenolpyruvate: step 2/7. Its function is as follows. Catalyzes the conversion of 3-deoxy-D-arabino-heptulosonate 7-phosphate (DAHP) to dehydroquinate (DHQ). In Syntrophotalea carbinolica (strain DSM 2380 / NBRC 103641 / GraBd1) (Pelobacter carbinolicus), this protein is 3-dehydroquinate synthase.